A 613-amino-acid polypeptide reads, in one-letter code: Dihydroxy-acid dehydratase (613 aa).

D81 is a binding site for Mg(2+). [2Fe-2S] cluster is bound at residue C122. The Mg(2+) site is built by D123 and K124. K124 is modified (N6-carboxylysine). C193 lines the [2Fe-2S] cluster pocket. E489 serves as a coordination point for Mg(2+). S515 functions as the Proton acceptor in the catalytic mechanism.

Belongs to the IlvD/Edd family. Homodimer. It depends on [2Fe-2S] cluster as a cofactor. Requires Mg(2+) as cofactor.

The catalysed reaction is (2R)-2,3-dihydroxy-3-methylbutanoate = 3-methyl-2-oxobutanoate + H2O. It carries out the reaction (2R,3R)-2,3-dihydroxy-3-methylpentanoate = (S)-3-methyl-2-oxopentanoate + H2O. Its pathway is amino-acid biosynthesis; L-isoleucine biosynthesis; L-isoleucine from 2-oxobutanoate: step 3/4. It functions in the pathway amino-acid biosynthesis; L-valine biosynthesis; L-valine from pyruvate: step 3/4. Its function is as follows. Functions in the biosynthesis of branched-chain amino acids. Catalyzes the dehydration of (2R,3R)-2,3-dihydroxy-3-methylpentanoate (2,3-dihydroxy-3-methylvalerate) into 2-oxo-3-methylpentanoate (2-oxo-3-methylvalerate) and of (2R)-2,3-dihydroxy-3-methylbutanoate (2,3-dihydroxyisovalerate) into 2-oxo-3-methylbutanoate (2-oxoisovalerate), the penultimate precursor to L-isoleucine and L-valine, respectively. This Pseudomonas fluorescens (strain Pf0-1) protein is Dihydroxy-acid dehydratase.